A 146-amino-acid polypeptide reads, in one-letter code: Large ribosomal subunit protein uL15 (146 aa).

The segment at 1–56 is disordered; it reads MKLHELKAAEGANKASKRVGRGTGSGLGKTSGRGQNGQNSRSGGGVRPGFEGGQMP. Gly residues-rich tracts occupy residues 21–35 and 42–52; these read RGTG…GRGQ and SGGGVRPGFEG.

The protein belongs to the universal ribosomal protein uL15 family. Part of the 50S ribosomal subunit.

Binds to the 23S rRNA. In Clostridium botulinum (strain ATCC 19397 / Type A), this protein is Large ribosomal subunit protein uL15.